We begin with the raw amino-acid sequence, 344 residues long: Isopentenyl-diphosphate delta-isomerase (344 aa).

Substrate is bound at residue 9–10 (RK). FMN is bound by residues 65-67 (AMT), S95, and N124. A substrate-binding site is contributed by Q154. E155 provides a ligand contact to Mg(2+). Residues K185, T215, 259-261 (GVR), and 280-281 (SG) contribute to the FMN site.

This sequence belongs to the IPP isomerase type 2 family. Homooctamer. Dimer of tetramers. Requires FMN as cofactor. The cofactor is NADPH. Mg(2+) serves as cofactor.

It is found in the cytoplasm. The catalysed reaction is isopentenyl diphosphate = dimethylallyl diphosphate. Involved in the biosynthesis of isoprenoids. Catalyzes the 1,3-allylic rearrangement of the homoallylic substrate isopentenyl (IPP) to its allylic isomer, dimethylallyl diphosphate (DMAPP). In Lacticaseibacillus casei (strain BL23) (Lactobacillus casei), this protein is Isopentenyl-diphosphate delta-isomerase.